The sequence spans 352 residues: Threonine synthase (352 aa).

At Lys59 the chain carries N6-(pyridoxal phosphate)lysine. Residues Asn85, 185-189 (GNAGN), and Thr314 contribute to the pyridoxal 5'-phosphate site.

Belongs to the threonine synthase family. Pyridoxal 5'-phosphate is required as a cofactor.

The catalysed reaction is O-phospho-L-homoserine + H2O = L-threonine + phosphate. It functions in the pathway amino-acid biosynthesis; L-threonine biosynthesis; L-threonine from L-aspartate: step 5/5. Catalyzes the gamma-elimination of phosphate from L-phosphohomoserine and the beta-addition of water to produce L-threonine. This Bacillus subtilis (strain 168) protein is Threonine synthase (thrC).